The following is a 619-amino-acid chain: Kinesin light chain 4 (619 aa).

Serine 2 carries the post-translational modification N-acetylserine. Positions 32–150 form a coiled coil; it reads GLESLHSEHQ…EEEKKHLEFL (119 aa). The TPR 1 repeat unit spans residues 55–88; it reads QQGGHEEGLVHEKARQLRRSMENIELGLSEAQVM. Residues 156–175 show a composition bias toward basic and acidic residues; it reads YDEDGHSMEEKEGDASKDSL. The segment at 156-200 is disordered; the sequence is YDEDGHSMEEKEGDASKDSLDDLFPNEEEEDSSNDLSRGQGAAAA. Phosphoserine is present on serine 174. The span at 179–188 shows a compositional bias: acidic residues; the sequence is FPNEEEEDSS. 5 TPR repeats span residues 211-244, 253-286, 295-328, 337-370, and 379-412; these read LRTL…LERT, ATML…REST, AATL…REKV, AKQL…YERQ, and ARTK…AHVQ. Serine 460 is subject to Phosphoserine. Residues 464–497 form a TPR 7 repeat; that stretch reads NTTLRNLGALYRRQGKLEAAETLEECALRSRKQG. A phosphoserine mark is found at serine 565, serine 566, and serine 590. Residues 571–619 are disordered; sequence RKLQGTEPRPSSSNMKRAASLNYLNQPNAAPLQTSRGLSASTVDLSSSS. Polar residues predominate over residues 592 to 608; sequence NYLNQPNAAPLQTSRGL. The span at 609–619 shows a compositional bias: low complexity; sequence SASTVDLSSSS. Threonine 612 carries the phosphothreonine modification.

The protein belongs to the kinesin light chain family. Oligomeric complex composed of two heavy chains and two light chains.

It localises to the cytoplasm. The protein localises to the cytoskeleton. Functionally, kinesin is a microtubule-associated force-producing protein that may play a role in organelle transport. The light chain may function in coupling of cargo to the heavy chain or in the modulation of its ATPase activity. This chain is Kinesin light chain 4 (Klc4), found in Rattus norvegicus (Rat).